The primary structure comprises 675 residues: Secretogranin-1 (675 aa).

An N-terminal signal peptide occupies residues 1–20 (MQRAMLLGLLGAAALAAVIS). Cysteines 36 and 57 form a disulfide. Basic and acidic residues predominate over residues 64 to 90 (SGKEVKGEEKGENENSKFEVRLLRDPS). 2 disordered regions span residues 64–507 (SGKE…YPTT) and 528–555 (NSDF…VTMT). 5 positions are modified to phosphoserine: serine 93, serine 99, serine 100, serine 129, and serine 147. Serine 93 carries an O-linked (Xyl...) (chondroitin sulfate) serine glycan. Basic and acidic residues-rich tracts occupy residues 148–161 (KEAK…RGGK) and 168–248 (GKIY…KPQE). Serine 190 is subject to Phosphoserine. O-linked (Xyl...) (chondroitin sulfate) serine glycosylation occurs at serine 236. Residues 250 to 269 (PDQDQSEEESEEGEEGEEGA) show a composition bias toward acidic residues. A phosphoserine mark is found at serine 255, serine 259, serine 291, serine 309, and serine 333. The span at 292–311 (YEGRRPLSEERKHAAGESKD) shows a compositional bias: basic and acidic residues. Tyrosine 339 carries the post-translational modification Sulfotyrosine. Basic and acidic residues-rich tracts occupy residues 361–410 (GSEE…EGAK) and 429–452 (SRQE…DTAK). Residues serine 362, serine 372, serine 375, and serine 397 each carry the phosphoserine modification. Tyrosine 469 is subject to Sulfotyrosine. Residues serine 490, serine 529, and serine 540 each carry the phosphoserine modification. The residue at position 563 (tyrosine 563) is a Sulfotyrosine. The disordered stretch occupies residues 620–646 (DFYDSEEQMGPHQEAEDEKDRADQRVL). Tyrosine 622 bears the Sulfotyrosine; partial mark. Phosphoserine is present on serine 624. Basic and acidic residues predominate over residues 637-646 (EKDRADQRVL). Residue arginine 674 is modified to Arginine amide; in CCB peptide short form.

Belongs to the chromogranin/secretogranin protein family. In terms of assembly, interacts with ITPR1 in the secretory granules. In terms of processing, extensively processed in glucagonoma tissue by limited proteolysis at conserved basic residues. Alternative processing are seen in different tissues. The proglucagon-converting enzymes present in transformed alpha-cells are likely candidates to be involved in tissue-specific processing. In terms of tissue distribution, expressed in the brain, adrenal medulla and anterior pituitary. In the brain, localized to the hippocampal formation, the endocrine hypothalamus, the olfactory system, and in anatomically distinct structures in the pons-medulla.

The protein localises to the secreted. In terms of biological role, secretogranin-1 is a neuroendocrine secretory granule protein, which may be the precursor for other biologically active peptides. The chain is Secretogranin-1 (Chgb) from Rattus norvegicus (Rat).